Reading from the N-terminus, the 491-residue chain is UDP-N-acetylmuramate--L-alanine ligase (491 aa).

126 to 132 (GTHGKTT) is an ATP binding site.

Belongs to the MurCDEF family.

Its subcellular location is the cytoplasm. It catalyses the reaction UDP-N-acetyl-alpha-D-muramate + L-alanine + ATP = UDP-N-acetyl-alpha-D-muramoyl-L-alanine + ADP + phosphate + H(+). It participates in cell wall biogenesis; peptidoglycan biosynthesis. Functionally, cell wall formation. This chain is UDP-N-acetylmuramate--L-alanine ligase, found in Yersinia pestis (strain Pestoides F).